The sequence spans 313 residues: Dehydrogenase/reductase SDR family member 1 (313 aa).

Ala-2 is subject to N-acetylalanine. Ile-19 is an NAD(+) binding site. Arg-21 carries the post-translational modification Omega-N-methylarginine. Asp-64 is an NAD(+) binding site. Ser-151 provides a ligand contact to substrate. 3 residues coordinate NAD(+): Tyr-163, Lys-167, and Thr-198. Tyr-163 functions as the Proton acceptor in the catalytic mechanism. A required for ER localization region spans residues 235–313; that stretch reads CVVALATDPN…WIIALYTSKF (79 aa).

The protein belongs to the short-chain dehydrogenases/reductases (SDR) family. Detected in heart, liver, adrenal glands, and at low levels in skeletal muscle, kidney, pancreas and brain.

The protein localises to the endoplasmic reticulum. The catalysed reaction is 17alpha-estradiol + NADP(+) = estrone + NADPH + H(+). It carries out the reaction testosterone + NADP(+) = androst-4-ene-3,17-dione + NADPH + H(+). The enzyme catalyses prostaglandin E1 + NADPH + H(+) = prostaglandin F1 + NADP(+). It catalyses the reaction isatin + NADPH + H(+) = 3-hydroxyindolin-2-one + NADP(+). NADPH-dependent oxidoreductase which catalyzes the reduction of steroids (estrone, androstene-3,17-dione and cortisone) as well as prostaglandin E1, isatin and xenobiotics in vitro. May have a role in steroid and/or xenobiotic metabolism. The sequence is that of Dehydrogenase/reductase SDR family member 1 from Homo sapiens (Human).